Consider the following 208-residue polypeptide: Guanylate kinase (208 aa).

The 182-residue stretch at 4-185 (GNLYILSAPS…TLKDLQSILQ (182 aa)) folds into the Guanylate kinase-like domain. 11–18 (APSGAGKS) contributes to the ATP binding site.

The protein belongs to the guanylate kinase family.

It is found in the cytoplasm. The enzyme catalyses GMP + ATP = GDP + ADP. Essential for recycling GMP and indirectly, cGMP. The sequence is that of Guanylate kinase from Haemophilus influenzae (strain 86-028NP).